Reading from the N-terminus, the 212-residue chain is Probable GTP-binding protein EngB (212 aa).

In terms of domain architecture, EngB-type G spans 38-210; sequence SLPEIAFVGK…KASLAKCIKP (173 aa). GTP-binding positions include 46 to 53, 73 to 77, 91 to 94, 158 to 161, and 189 to 191; these read GKSNVGKS, GRTRQ, DLPG, TKSD, and VSN. Serine 53 and threonine 75 together coordinate Mg(2+).

It belongs to the TRAFAC class TrmE-Era-EngA-EngB-Septin-like GTPase superfamily. EngB GTPase family. Requires Mg(2+) as cofactor.

Necessary for normal cell division and for the maintenance of normal septation. The chain is Probable GTP-binding protein EngB from Rickettsia africae (strain ESF-5).